The primary structure comprises 1733 residues: Gag-Pol polyprotein (1733 aa).

A lipid anchor (N-myristoyl glycine; by host) is attached at Gly-2. Positions 109–112 match the PTAP/PSAP motif motif; that stretch reads PTAP. The short motif at 128 to 132 is the LYPX(n)L motif element; it reads LYPAL. Disordered stretches follow at residues 139–218, 449–497, and 511–549; these read KPPK…LRMG, KEER…RPQL, and WAKD…PEPR. The PPXY motif signature appears at 161 to 164; sequence PPPY. A Phosphoserine; by host modification is found at Ser-190. Residues 436–476 are a coiled coil; that stretch reads EEREERIRREIEEKEERRRAEDEQRERERDRRRHREMSKLL. Basic and acidic residues-rich tracts occupy residues 449–464 and 484–497; these read KEER…ERER and RQDR…RPQL. The segment at 500-517 adopts a CCHC-type zinc-finger fold; the sequence is DQCAYCKEKGHWAKDCPK. The segment covering 526–535 has biased composition (low complexity); it reads RPQTSLLTLG. Residues 559-629 form the Peptidase A2 domain; that stretch reads VTFLVDTGAQ…CPYPLLGRDL (71 aa). Residue Asp-564 is the Protease; shared with dimeric partner of the active site. RNA is bound by residues Tyr-721, Asp-771, Arg-773, and Pro-787. The 192-residue stretch at 739–930 folds into the Reverse transcriptase domain; the sequence is LDQGILVPCQ…KQVKYLGYLL (192 aa). Residue Asp-807 participates in Mg(2+) binding. RNA is bound by residues Asn-851 and Pro-853. Residues Asp-881 and Asp-882 each contribute to the Mg(2+) site. Residues Arg-941, Arg-955, Arg-958, and Phe-966 each contribute to the DNA site. Lys-1054 and Lys-1055 together coordinate RNA. Trp-1063 contacts DNA. Lys-1082 lines the RNA pocket. Residue Arg-1113 participates in DNA binding. An RNase H type-1 domain is found at 1172–1318; that stretch reads PDADYTWYTD…ADQAAREAAM (147 aa). Asp-1181 contributes to the Mg(2+) binding site. RNA contacts are provided by Ser-1184 and Leu-1186. DNA-binding residues include Gln-1187, Ser-1214, and Gln-1216. The Mg(2+) site is built by Glu-1219 and Asp-1240. 2 residues coordinate RNA: Arg-1242 and Arg-1266. Asp-1310, Asp-1453, and Asp-1512 together coordinate Mg(2+). The region spanning 1442–1600 is the Integrase catalytic domain; sequence RGHRPGTHWE…TPYEILYGAP (159 aa).

Homohexamer, that further associates as homomultimer. The virus core is composed of a lattice formed from hexagonal rings, each containing six capsid monomers. The protease is a homodimer, whose active site consists of two apposed aspartic acid residues. The reverse transcriptase is a monomer. As to quaternary structure, interacts (via PPXY motif) with host NEDD4. Interacts (via PSAP motif) with host TSG101. Interacts (via LYPX(n)L motif) with host PDCD6IP. In terms of assembly, the reverse transcriptase is a monomer (Potential). Interacts (via RNase domains) with host release factor ETF1; this interaction is essential for translational readthrough of amber codon between viral gag and pol genes, as well as for viral replication. Homodimer. Requires Mg(2+) as cofactor. The cofactor is Mn(2+). Specific enzymatic cleavages by the viral protease yield mature proteins. The protease is released by autocatalytic cleavage. The polyprotein is cleaved during and after budding, this process is termed maturation. In terms of processing, sumoylated; which is required for virus replication. Post-translationally, phosphorylated on serine residues.

The protein localises to the host cell membrane. The protein resides in the virion. The catalysed reaction is DNA(n) + a 2'-deoxyribonucleoside 5'-triphosphate = DNA(n+1) + diphosphate. The enzyme catalyses Endonucleolytic cleavage to 5'-phosphomonoester.. In terms of biological role, plays a role in budding and is processed by the viral protease during virion maturation outside the cell. During budding, it recruits, in a PPXY-dependent or independent manner, Nedd4-like ubiquitin ligases that conjugate ubiquitin molecules to Gag, or to Gag binding host factors. Interaction with HECT ubiquitin ligases probably link the viral protein to the host ESCRT pathway and facilitate release. Functionally, targets Gag and gag-pol polyproteins to the plasma membrane via a multipartite membrane binding signal, that includes its myristoylated N-terminus. Also mediates nuclear localization of the pre-integration complex. Forms the spherical core of the virion that encapsulates the genomic RNA-nucleocapsid complex. Its function is as follows. Involved in the packaging and encapsidation of two copies of the genome. Binds with high affinity to conserved UCUG elements within the packaging signal, located near the 5'-end of the genome. This binding is dependent on genome dimerization. Acts as a nucleic acid chaperone which is involved in rearrangement of nucleic acid secondary structures during gRNA retrotranscription. In terms of biological role, the aspartyl protease mediates proteolytic cleavages of Gag and Gag-Pol polyproteins during or shortly after the release of the virion from the plasma membrane. Cleavages take place as an ordered, step-wise cascade to yield mature proteins. This process is called maturation. Displays maximal activity during the budding process just prior to particle release from the cell. Functionally, RT is a multifunctional enzyme that converts the viral dimeric RNA genome into dsDNA in the cytoplasm, shortly after virus entry into the cell. This enzyme displays a DNA polymerase activity that can copy either DNA or RNA templates, and a ribonuclease H (RNase H) activity that cleaves the RNA strand of RNA-DNA heteroduplexes in a partially processive 3' to 5' endonucleasic mode. Conversion of viral genomic RNA into dsDNA requires many steps. A tRNA binds to the primer-binding site (PBS) situated at the 5' end of the viral RNA. RT uses the 3' end of the tRNA primer to perform a short round of RNA-dependent minus-strand DNA synthesis. The reading proceeds through the U5 region and ends after the repeated (R) region which is present at both ends of viral RNA. The portion of the RNA-DNA heteroduplex is digested by the RNase H, resulting in a ssDNA product attached to the tRNA primer. This ssDNA/tRNA hybridizes with the identical R region situated at the 3' end of viral RNA. This template exchange, known as minus-strand DNA strong stop transfer, can be either intra- or intermolecular. RT uses the 3' end of this newly synthesized short ssDNA to perform the RNA-dependent minus-strand DNA synthesis of the whole template. RNase H digests the RNA template except for a polypurine tract (PPT) situated at the 5' end of the genome. It is not clear if both polymerase and RNase H activities are simultaneous. RNase H probably can proceed both in a polymerase-dependent (RNA cut into small fragments by the same RT performing DNA synthesis) and a polymerase-independent mode (cleavage of remaining RNA fragments by free RTs). Secondly, RT performs DNA-directed plus-strand DNA synthesis using the PPT that has not been removed by RNase H as primers. PPT and tRNA primers are then removed by RNase H. The 3' and 5' ssDNA PBS regions hybridize to form a circular dsDNA intermediate. Strand displacement synthesis by RT to the PBS and PPT ends produces a blunt ended, linear dsDNA copy of the viral genome that includes long terminal repeats (LTRs) at both ends. Catalyzes viral DNA integration into the host chromosome, by performing a series of DNA cutting and joining reactions. This enzyme activity takes place after virion entry into a cell and reverse transcription of the RNA genome in dsDNA. The first step in the integration process is 3' processing. This step requires a complex comprising the viral genome, matrix protein and integrase. This complex is called the pre-integration complex (PIC). The integrase protein removes 2 nucleotides from each 3' end of the viral DNA, leaving recessed CA OH's at the 3' ends. In the second step that requires cell division, the PIC enters cell nucleus. In the third step, termed strand transfer, the integrase protein joins the previously processed 3' ends to the 5' ends of strands of target cellular DNA at the site of integration. The last step is viral DNA integration into host chromosome. The sequence is that of Gag-Pol polyprotein (gag-pol) from Homo sapiens (Human).